Here is a 230-residue protein sequence, read N- to C-terminus: Aminodeoxyfutalosine nucleosidase (230 aa).

Residue E13 is the Proton acceptor of the active site. Substrate contacts are provided by residues G80, V154, and M174–E175. The Proton donor role is filled by D198.

The protein belongs to the PNP/UDP phosphorylase family. MtnN subfamily. As to quaternary structure, homodimer.

The enzyme catalyses 6-amino-6-deoxyfutalosine + H2O = dehypoxanthine futalosine + adenine. It carries out the reaction S-adenosyl-L-homocysteine + H2O = S-(5-deoxy-D-ribos-5-yl)-L-homocysteine + adenine. It catalyses the reaction S-methyl-5'-thioadenosine + H2O = 5-(methylsulfanyl)-D-ribose + adenine. The catalysed reaction is 5'-deoxyadenosine + H2O = 5-deoxy-D-ribose + adenine. It participates in quinol/quinone metabolism; menaquinone biosynthesis. It functions in the pathway amino-acid biosynthesis; L-methionine biosynthesis via salvage pathway; S-methyl-5-thio-alpha-D-ribose 1-phosphate from S-methyl-5'-thioadenosine (hydrolase route): step 1/2. Its activity is regulated as follows. Is inhibited by the transition state analog BuT-DADMe-ImmA. This compound is also able to inhibit H.pylori growth and is more efficient than antibiotics commonly used in ulcer therapy. Catalyzes the direct conversion of aminodeoxyfutalosine (AFL) into dehypoxanthine futalosine (DHFL) and adenine via the hydrolysis of the N-glycosidic bond; this reaction seems to represent an essential step in the menaquinone biosynthesis pathway in Helicobacter species. Also catalyzes the hydrolysis of 5'-methylthioadenosine (MTA) to adenine and 5'-methylthioribose. Can also probably use S-adenosylhomocysteine (SAH) as substrate, leading to adenine and S-ribosylhomocysteine. These other activities highlight the tremendous versatility of the enzyme, which also plays key roles in S-adenosylmethionine recycling and in the biosynthesis of the quorum-sensing molecule autoinducer-2. The sequence is that of Aminodeoxyfutalosine nucleosidase (mtnN) from Helicobacter pylori (strain J99 / ATCC 700824) (Campylobacter pylori J99).